The primary structure comprises 346 residues: Cyclin-dependent kinase 20 (346 aa).

Positions 4 to 288 constitute a Protein kinase domain; sequence YCILGRIGEG…ASQALLHQYF (285 aa). Residues 10 to 18 and Lys33 contribute to the ATP site; that span reads IGEGAHGIV. Asp127 acts as the Proton acceptor in catalysis. Positions 298-324 are disordered; sequence SELPIPQRPGGPAPKAHPGPPHVHDFH. The span at 303–318 shows a compositional bias: pro residues; it reads PQRPGGPAPKAHPGPP.

This sequence belongs to the protein kinase superfamily. CMGC Ser/Thr protein kinase family. CDC2/CDKX subfamily. In terms of assembly, monomer. Interacts with MAK. Interacts with TBC1D32.

Its subcellular location is the nucleus. It is found in the cytoplasm. The protein resides in the cell projection. The protein localises to the cilium. It catalyses the reaction L-seryl-[protein] + ATP = O-phospho-L-seryl-[protein] + ADP + H(+). The enzyme catalyses L-threonyl-[protein] + ATP = O-phospho-L-threonyl-[protein] + ADP + H(+). Functionally, involved in cell growth. Activates CDK2, a kinase involved in the control of the cell cycle, by phosphorylating residue 'Thr-160'. Required for high-level Shh responses in the developing neural tube. Together with TBC1D32, controls the structure of the primary cilium by coordinating assembly of the ciliary membrane and axoneme, allowing GLI2 to be properly activated in response to SHH signaling. The chain is Cyclin-dependent kinase 20 (Cdk20) from Mus musculus (Mouse).